We begin with the raw amino-acid sequence, 34 residues long: Photosystem II reaction center protein Psb30 (34 aa).

Residues valine 6–leucine 26 form a helical membrane-spanning segment.

The protein belongs to the Psb30/Ycf12 family. PSII is composed of 1 copy each of membrane proteins PsbA, PsbB, PsbC, PsbD, PsbE, PsbF, PsbH, PsbI, PsbJ, PsbK, PsbL, PsbM, PsbT, PsbX, PsbY, PsbZ, Psb30/Ycf12, peripheral proteins of the oxygen-evolving complex and a large number of cofactors. It forms dimeric complexes.

Its subcellular location is the plastid. It localises to the chloroplast thylakoid membrane. Functionally, a core subunit of photosystem II (PSII), probably helps stabilize the reaction center. The chain is Photosystem II reaction center protein Psb30 from Trieres chinensis (Marine centric diatom).